Reading from the N-terminus, the 93-residue chain is Small ribosomal subunit protein bS16 (93 aa).

This sequence belongs to the bacterial ribosomal protein bS16 family.

The protein is Small ribosomal subunit protein bS16 of Dictyoglomus turgidum (strain DSM 6724 / Z-1310).